Here is a 110-residue protein sequence, read N- to C-terminus: METIAKHRYARTSAQKARLVADLVRGKKVAQALEILTFTNKKAAALVKKVLESAIANAEHNDGADIDDLKVAKIFVDEGPSMKRVMPRAKGRADRILKRTSHITVVVSDR.

It belongs to the universal ribosomal protein uL22 family. Part of the 50S ribosomal subunit.

Its function is as follows. This protein binds specifically to 23S rRNA; its binding is stimulated by other ribosomal proteins, e.g. L4, L17, and L20. It is important during the early stages of 50S assembly. It makes multiple contacts with different domains of the 23S rRNA in the assembled 50S subunit and ribosome. In terms of biological role, the globular domain of the protein is located near the polypeptide exit tunnel on the outside of the subunit, while an extended beta-hairpin is found that lines the wall of the exit tunnel in the center of the 70S ribosome. The sequence is that of Large ribosomal subunit protein uL22 from Histophilus somni (strain 129Pt) (Haemophilus somnus).